Here is a 421-residue protein sequence, read N- to C-terminus: CinA-like protein (421 aa).

This sequence belongs to the CinA family.

The chain is CinA-like protein from Synechococcus sp. (strain ATCC 27144 / PCC 6301 / SAUG 1402/1) (Anacystis nidulans).